Consider the following 157-residue polypeptide: MAYTVSSANQLVYLGSVWADPLELQNLCTSALGNQFQTQQARTTVQQQFSDVWKTIPTATVRFPATGFKVFRYNAVLDSLVSALLGAFDTRNRIIEVENPQNPTTAETLDATRRVDDATVAIRASISNLMNELVRGTGMYNQALFESASGLTWATTP.

The residue at position 2 (alanine 2) is an N-acetylalanine; by host.

Belongs to the virgaviridae capsid protein family.

Its subcellular location is the virion. Functionally, capsid protein self-assembles to form rod-shaped virions about 18 nm in diameter with a central canal enclosing the viral genomic RNA. This is Capsid protein (CP) from Vicia faba (Broad bean).